The chain runs to 299 residues: Putative transposase InsZ (299 aa).

The span at 276–291 (PSRPRSVKISKTRYPV) shows a compositional bias: basic residues. The segment at 276–299 (PSRPRSVKISKTRYPVKHSAAPLK) is disordered.

This chain is Putative transposase InsZ (insZ), found in Escherichia coli (strain K12).